A 61-amino-acid chain; its full sequence is Furostanol glycoside 26-O-beta-glucosidase (61 aa).

Residue aspartate 33 is the Proton donor/acceptor of the active site. Aspartate 33 is a binding site for D-glucose.

Belongs to the glycosyl hydrolase 3 family. In terms of assembly, monomer. In terms of processing, glycosylated. Expressed in petioles and leaves, but not in fruits.

It carries out the reaction protodioscin + H2O = 26-deglucoprotodioscin + D-glucose. With respect to regulation, inhibited by Hg(2+) and D-glucono-1,5-lactone. Functionally, beta-glucosidase highly specific for the cleavage of C-26-bound glucose moiety of furostanol glycosides torvosides A and H. Hydrolyzes only p-nitrophenyl-beta-glucoside, but not p-nitrophenyl-beta-D-fucoside, p-nitrophenyl-beta-L-fucoside, p-nitrophenyl-beta-D-xyloside, p-nitrophenyl-beta-D-galactoside, p-nitrophenyl-beta-D-NAc-glucosamine, p-nitrophenyl-beta-D-mannoside or any of the p-nitrophenyl-alpha-glycosides tested. This is Furostanol glycoside 26-O-beta-glucosidase from Solanum torvum (Turkey berry).